Reading from the N-terminus, the 510-residue chain is Secreted RxLR effector protein 108 (510 aa).

Positions 1–20 are cleaved as a signal peptide; that stretch reads MRGAYYVLTALFVVTSSDIA. Asn47 is a glycosylation site (N-linked (GlcNAc...) asparagine). The short motif at 48–65 is the RxLR-dEER element; sequence RSLRGSRDGRNDLANEER. Disordered stretches follow at residues 111-139 and 386-442; these read RAAKAVEEKSRPAKAAKKTPRAAKAAKKT and KRSR…DDPK. Over residues 122-137 the composition is skewed to basic residues; that stretch reads PAKAAKKTPRAAKAAK. The span at 393-405 shows a compositional bias: polar residues; it reads DGNTDTASLPSKQ. Residues 429-442 are compositionally biased toward basic and acidic residues; sequence VPTKEIKSSFDDPK.

It belongs to the RxLR effector family.

The protein resides in the secreted. Its subcellular location is the host nucleus. Functionally, secreted effector that completely suppresses the host cell death induced by cell death-inducing proteins. This is Secreted RxLR effector protein 108 from Plasmopara viticola (Downy mildew of grapevine).